The following is a 199-amino-acid chain: Heparin-binding hemagglutinin (199 aa).

The span at Lys-162–Lys-180 shows a compositional bias: low complexity. Residues Lys-162 to Lys-199 are disordered. Positions Ala-181 to Lys-199 are enriched in basic residues.

The protein to M.leprae HbhA. In terms of processing, glycosylated. Glycosylation may protect the protein from proteolytic degradation and be important for hemagglutination. It suggests that the carbohydrate moiety may be located within the C-terminal domain of HbhA.

The protein resides in the cell surface. Required for extrapulmonary dissemination. Mediates adherence to epithelial cells by binding to sulfated glycoconjugates present at the surface of these cells. This chain is Heparin-binding hemagglutinin (hbhA), found in Mycobacterium tuberculosis (strain CDC 1551 / Oshkosh).